The primary structure comprises 81 residues: Translational regulator CsrA (81 aa).

This sequence belongs to the CsrA/RsmA family. In terms of assembly, homodimer; the beta-strands of each monomer intercalate to form a hydrophobic core, while the alpha-helices form wings that extend away from the core.

It is found in the cytoplasm. Its function is as follows. A translational regulator that binds mRNA to regulate translation initiation and/or mRNA stability. Usually binds in the 5'-UTR at or near the Shine-Dalgarno sequence preventing ribosome-binding, thus repressing translation. Its main target seems to be the major flagellin gene, while its function is anatagonized by FliW. This chain is Translational regulator CsrA, found in Borreliella burgdorferi (strain ATCC 35210 / DSM 4680 / CIP 102532 / B31) (Borrelia burgdorferi).